The following is a 338-amino-acid chain: Ketol-acid reductoisomerase (NADP(+)) (338 aa).

In terms of domain architecture, KARI N-terminal Rossmann spans 1 to 181; the sequence is MKVFYDKDCD…GGGRTGIIET (181 aa). NADP(+) is bound by residues 24–27, Arg47, Ser50, Thr52, and 82–85; these read YGSQ and DEFQ. His107 is a catalytic residue. Gly133 is an NADP(+) binding site. The KARI C-terminal knotted domain maps to 182–327; it reads TFKDETETDL…EQLRSMMPWI (146 aa). Mg(2+)-binding residues include Asp190, Glu194, Glu226, and Glu230. Position 251 (Ser251) interacts with substrate.

This sequence belongs to the ketol-acid reductoisomerase family. The cofactor is Mg(2+).

The catalysed reaction is (2R)-2,3-dihydroxy-3-methylbutanoate + NADP(+) = (2S)-2-acetolactate + NADPH + H(+). The enzyme catalyses (2R,3R)-2,3-dihydroxy-3-methylpentanoate + NADP(+) = (S)-2-ethyl-2-hydroxy-3-oxobutanoate + NADPH + H(+). It functions in the pathway amino-acid biosynthesis; L-isoleucine biosynthesis; L-isoleucine from 2-oxobutanoate: step 2/4. Its pathway is amino-acid biosynthesis; L-valine biosynthesis; L-valine from pyruvate: step 2/4. In terms of biological role, involved in the biosynthesis of branched-chain amino acids (BCAA). Catalyzes an alkyl-migration followed by a ketol-acid reduction of (S)-2-acetolactate (S2AL) to yield (R)-2,3-dihydroxy-isovalerate. In the isomerase reaction, S2AL is rearranged via a Mg-dependent methyl migration to produce 3-hydroxy-3-methyl-2-ketobutyrate (HMKB). In the reductase reaction, this 2-ketoacid undergoes a metal-dependent reduction by NADPH to yield (R)-2,3-dihydroxy-isovalerate. This Pseudomonas fluorescens (strain ATCC BAA-477 / NRRL B-23932 / Pf-5) protein is Ketol-acid reductoisomerase (NADP(+)).